The sequence spans 600 residues: 1-deoxy-D-xylulose-5-phosphate synthase (600 aa).

Thiamine diphosphate-binding positions include His-63 and 104–106 (GHS). Position 135 (Asp-135) interacts with Mg(2+). Residues 136–137 (GA), Asn-164, Tyr-271, and Glu-352 contribute to the thiamine diphosphate site. Residue Asn-164 participates in Mg(2+) binding.

This sequence belongs to the transketolase family. DXPS subfamily. Homodimer. Mg(2+) serves as cofactor. Thiamine diphosphate is required as a cofactor.

It carries out the reaction D-glyceraldehyde 3-phosphate + pyruvate + H(+) = 1-deoxy-D-xylulose 5-phosphate + CO2. It functions in the pathway metabolic intermediate biosynthesis; 1-deoxy-D-xylulose 5-phosphate biosynthesis; 1-deoxy-D-xylulose 5-phosphate from D-glyceraldehyde 3-phosphate and pyruvate: step 1/1. Catalyzes the acyloin condensation reaction between C atoms 2 and 3 of pyruvate and glyceraldehyde 3-phosphate to yield 1-deoxy-D-xylulose-5-phosphate (DXP). This Campylobacter fetus subsp. fetus (strain 82-40) protein is 1-deoxy-D-xylulose-5-phosphate synthase.